A 664-amino-acid polypeptide reads, in one-letter code: 1,4-alpha-glucan branching enzyme GlgB 2 (664 aa).

The segment covering 1–17 has biased composition (basic and acidic residues); the sequence is MGGKEMRNCKELKHEKN. A disordered region spans residues 1–31; that stretch reads MGGKEMRNCKELKHEKNGNVTEKVGKNKGKS. Aspartate 342 acts as the Nucleophile in catalysis. The Proton donor role is filled by glutamate 395.

The protein belongs to the glycosyl hydrolase 13 family. GlgB subfamily. Monomer.

The enzyme catalyses Transfers a segment of a (1-&gt;4)-alpha-D-glucan chain to a primary hydroxy group in a similar glucan chain.. It functions in the pathway glycan biosynthesis; glycogen biosynthesis. Its function is as follows. Catalyzes the formation of the alpha-1,6-glucosidic linkages in glycogen by scission of a 1,4-alpha-linked oligosaccharide from growing alpha-1,4-glucan chains and the subsequent attachment of the oligosaccharide to the alpha-1,6 position. The protein is 1,4-alpha-glucan branching enzyme GlgB 2 (glgB2) of Clostridium perfringens (strain 13 / Type A).